A 227-amino-acid chain; its full sequence is Deoxyribose-phosphate aldolase (227 aa).

D84 (proton donor/acceptor) is an active-site residue. K146 (schiff-base intermediate with acetaldehyde) is an active-site residue. Catalysis depends on K188, which acts as the Proton donor/acceptor.

This sequence belongs to the DeoC/FbaB aldolase family. DeoC type 1 subfamily.

Its subcellular location is the cytoplasm. The catalysed reaction is 2-deoxy-D-ribose 5-phosphate = D-glyceraldehyde 3-phosphate + acetaldehyde. It participates in carbohydrate degradation; 2-deoxy-D-ribose 1-phosphate degradation; D-glyceraldehyde 3-phosphate and acetaldehyde from 2-deoxy-alpha-D-ribose 1-phosphate: step 2/2. Catalyzes a reversible aldol reaction between acetaldehyde and D-glyceraldehyde 3-phosphate to generate 2-deoxy-D-ribose 5-phosphate. This Pyrobaculum islandicum (strain DSM 4184 / JCM 9189 / GEO3) protein is Deoxyribose-phosphate aldolase.